The sequence spans 518 residues: MDESKKISLGQFFTPTHIVKYMIGLMTKNKNASILEPSSGNGVFLDSLIQLGYTNLTSYEIDGDIISHPFVINSSFITSYDKPQYDSIIGNPPYVRWKNLSELQKKELKDNSIWKMYCNSLCDYFYIFIIKSILQLKVGGELIFICPDYFFSTKNAEGLRKFLINNGSFEKIILFNESKVFHGVSSSVVIFKYIKGKNIDNINIINIDSKSPIKSEDIESLGESYYIPRFSSSDVWVTSPNHIKVALDKFESYCKTIKKVQPKSLFDDLEFSRIGSVCDIGNGMVSGLDKAFQMNDINYSELELLNSICVAKAKHLDAFCFSGYTRYKFILDDINEDKLITYFPNFFYEFNNYKDYLLKRYSYNKYLPYWKWAFLRNFSLFSKNEKKIFVPCKERISKKSNFRFSLVDEFIYPTQDVTALYKKENVKESIEYITAYLNSKAVFLWMKYKGVVKGNVVEFSEKPLANIPFRRIDWQLKSEKKIHDDITNLVRKYLSNKEFSILHEINLNLEKLGIKVEI.

This sequence belongs to the N(4)/N(6)-methyltransferase family.

It catalyses the reaction a 2'-deoxyadenosine in DNA + S-adenosyl-L-methionine = an N(6)-methyl-2'-deoxyadenosine in DNA + S-adenosyl-L-homocysteine + H(+). In terms of biological role, a gamma subtype methylase, recognizes the double-stranded sequence 5'-GTYRAC-3', methylates A-5 on both strands, and protects the DNA from cleavage by the HindII endonuclease. The sequence is that of Type II methyltransferase M.HindII (hindIIM) from Haemophilus influenzae (strain ATCC 51907 / DSM 11121 / KW20 / Rd).